We begin with the raw amino-acid sequence, 409 residues long: MRGIIEDLSQDGLGVINGIEVPFCYPGDEVRITRTRDRFGRKMASEFSLITPSPLRQRPRCRHYGKCGGCLWQGMKYEEQLKFKKELFRRITGIEAEILGSPRIWEFRNISNFIVSVNGIGLKEFARPKTVVDLKECPVFSNRTPLYIRAMKEFLRESGLKPWNWKEGDVHYLQVREGKFTGEVMVNIIAHRPPEETILEYFPFADSVYWSIKRDKRDDPSGEPIHLGEKEFISEKIFGIKYLLRPGIFFQTNSYALPLLLKAVEGFLDGSKVLDLYSGIGTFSLYLTKKGFNVVGVEINKTAVEVAKLSAELNSLNVEFKAKRAEEENIEGYDALILDPPRKGLGEFAGVVEKKGPENVVYVSCNPKRFILDFKNYLSRSYKVEDAILIDMFPHTPHVEAVIKLRKYS.

Residues Cys-61, Cys-67, Cys-70, and Cys-137 each contribute to the [4Fe-4S] cluster site. 4 residues coordinate S-adenosyl-L-methionine: Gln-251, Tyr-277, Glu-298, and Asp-339. Cys-365 (nucleophile) is an active-site residue.

It belongs to the class I-like SAM-binding methyltransferase superfamily. RNA M5U methyltransferase family.

The catalysed reaction is uridine(747) in 23S rRNA + S-adenosyl-L-methionine = 5-methyluridine(747) in 23S rRNA + S-adenosyl-L-homocysteine + H(+). Functionally, catalyzes the formation of 5-methyl-uridine at position equivalent to 747 (m5U747) in 23S rRNA. This Pyrococcus furiosus (strain ATCC 43587 / DSM 3638 / JCM 8422 / Vc1) protein is 23S rRNA (uracil(747)-C(5))-methyltransferase.